The following is a 251-amino-acid chain: Probable transcriptional regulatory protein cauri_1421 (251 aa).

The disordered stretch occupies residues 1-21; that stretch reads MAGHSKWATTKHKKAANDAKR.

This sequence belongs to the TACO1 family.

It localises to the cytoplasm. The sequence is that of Probable transcriptional regulatory protein cauri_1421 from Corynebacterium aurimucosum (strain ATCC 700975 / DSM 44827 / CIP 107346 / CN-1) (Corynebacterium nigricans).